A 278-amino-acid chain; its full sequence is Asnovolin E/Chermesin D methyltransferase nvfJ (278 aa).

S-adenosyl-L-methionine-binding positions include 125-126, 152-153, and 153-154; these read DL, NI, and IL.

This sequence belongs to the class I-like SAM-binding methyltransferase superfamily. In terms of assembly, homodimer.

The catalysed reaction is chermesin D + S-adenosyl-L-methionine = chermesin D methyl ester + S-adenosyl-L-homocysteine. It carries out the reaction asnovolin I + S-adenosyl-L-methionine = asnovolin K + S-adenosyl-L-homocysteine. The protein operates within secondary metabolite biosynthesis; terpenoid biosynthesis. Methyltransferase; part of the gene cluster that mediates the biosynthesis of novofumigatonin, a heavily oxygenated meroterpenoid containing a unique orthoester moiety. The first step of the pathway is the synthesis of 3,5-dimethylorsellinic acid (DMOA) by the polyketide synthase nvfA via condensation of one acetyl-CoA starter unit with 3 malonyl-CoA units and 2 methylations. DMOA is then converted to farnesyl-DMOA by the farnesyltransferase nvfB. Epoxydation by FAD-dependent monooxygenase nvfK, followed by a protonation-initiated cyclization catalyzed by the terpene cyclase nvfL leads to the production of asnavolin H. The short chain dehydrogenase nvfC then as a 3-OH dehydrogenase of asnovolin H to yield chemesin D. There are two branches to synthesize asnovolin A from chemesin D. In one branch, chemesin D undergoes Baeyer-Villiger oxidation by nvfH, methylation by nvfJ, and enoyl reduction by the nvfM D enoylreductase that reduces the double bond between C-5'and C-6', to form respectively asnovolin I, asnovolin K, and asnovolin A. In the other branch, the methylation precedes the Baeyer-Villiger oxidation and the enoyl reduction to yield asnovolin A via the asnovolin J intermediate. Asnovolin A is further converted to fumigatonoid A by the Fe(II)/2-oxoglutarate-dependent dioxygenase nvfI that catalyzes an endoperoxidation reaction. The alpha/beta hydrolase nvfD then acts as an epimerase that converts fumigatonoid A to its C-5' epimer, which then undergoes spontaneous or nvfD-catalyzed lactonization. The following step utilizes the ketoreductase nvfG to produce fumigatonoid B. The dioxygenase nvfE further converts fumigatonoid B into fumigatonoid C. Finally the Fe(II)/2-oxoglutarate-dependent dioxygenase nvfF catalyzes two rounds of oxidation to transform fumigatonoid C into the end product, novofumigatonin A. The protein is Asnovolin E/Chermesin D methyltransferase nvfJ of Aspergillus novofumigatus (strain IBT 16806).